The chain runs to 375 residues: Alpha-2,8-sialyltransferase 8B (375 aa).

Residues Met1–Arg6 are Cytoplasmic-facing. The chain crosses the membrane as a helical; Signal-anchor for type II membrane protein span at residues Ser7–Ala23. The Lumenal portion of the chain corresponds to Asp24–Thr375. N-linked (GlcNAc...) asparagine glycans are attached at residues Asn60, Asn72, Asn89, and Asn134. Intrachain disulfides connect Cys157–Cys307 and Cys171–Cys371. Residues Asn162 and Asn185 each contribute to the CMP-N-acetyl-beta-neuraminate site. Asn219 and Asn234 each carry an N-linked (GlcNAc...) asparagine glycan. CMP-N-acetyl-beta-neuraminate is bound by residues Thr294, Thr295, Gly296, Trp316, Tyr329, and His330. The active-site Proton donor/acceptor is the His346.

Belongs to the glycosyltransferase 29 family. Autopolysialylated. Autopolysialylation is not a prerequisite for the polysialylation acitity, but enhances the polysialylation acitity.

The protein resides in the golgi apparatus membrane. It localises to the secreted. The protein localises to the cell membrane. It catalyses the reaction [N-acetyl-alpha-D-neuraminosyl-(2-&gt;8)](n) + CMP-N-acetyl-beta-neuraminate = [N-acetyl-alpha-D-neuraminosyl-(2-&gt;8)](n+1) + CMP + H(+). It participates in protein modification; protein glycosylation. Its function is as follows. Catalyzes the transfer of a sialic acid from a CMP-linked sialic acid donor onto a terminal alpha-2,3-, alpha-2,6-, or alpha-2,8-linked sialic acid of an N-linked glycan acceptor through alpha-2,8-linkages. Therefore, participates in polysialic acid synthesis on various sialylated N-acetyllactosaminyl oligosaccharides (alpha-2,3-, alpha-2,6-, or alpha-2,8-linked sialic acid), including NCAM1, NCAM1 N-glycans, FETUB N-glycans, and to a lesser extent sialylparagloboside (SPG) and AHSG, which does not require the initial addition of an alpha 2,8-sialic acid. However, does not exhibit sialic acid-polymerase activity. Catalyzes polysialic acid synthesis in the hippocampal on NCAM1 and supports neurite outgrowth. ST8SIA2-mediated polysialylation influences on oligodendrocyte differentiation and may promote the integrity of myelin and axons. This chain is Alpha-2,8-sialyltransferase 8B, found in Mus musculus (Mouse).